Consider the following 33-residue polypeptide: Toxin BcV (33 aa).

An intrachain disulfide couples Cys-6 to Cys-30.

The protein resides in the secreted. Its subcellular location is the nematocyst. Functionally, potently and reversibly blocks mammalian Kv11/KCNH/ERG voltage-gated potassium channels. Acts as a gating-modifier toxin that shifts the voltage-dependence of ERG activation in the positive direction and suppresses its current amplitudes elicited by strong depolarizing pulses that maximally activate the channels. In Bunodosoma caissarum (Sea anemone), this protein is Toxin BcV.